A 222-amino-acid polypeptide reads, in one-letter code: Charged multivesicular body protein 2a (222 aa).

Met-1 carries the N-acetylmethionine modification. Residues 12 to 53 (EELLRQNQRALNRAMRELDRERQKLETQEKKIIADIKKMAKQ) adopt a coiled-coil conformation. An interaction with VPS4B region spans residues 56–222 (MDAVRIMAKD…EERLKNLRRD (167 aa)). The span at 179–188 (LSNLPSTGGS) shows a compositional bias: polar residues. The segment at 179–198 (LSNLPSTGGSLSVAAGGKKA) is disordered. Ser-184 carries the post-translational modification Phosphoserine. Thr-185 is subject to Phosphothreonine. Residues Ser-188, Ser-190, and Ser-203 each carry the phosphoserine modification. A coiled-coil region spans residues 195–222 (GKKAEATASALADADADLEERLKNLRRD). Residues 210–220 (ADLEERLKNLR) carry the MIT-interacting motif motif. Residues 217–222 (KNLRRD) form an interaction with VTA1 region.

This sequence belongs to the SNF7 family. As to quaternary structure, probable core component of the endosomal sorting required for transport complex III (ESCRT-III). ESCRT-III components are thought to multimerize to form a flat lattice on the perimeter membrane of the endosome. Several assembly forms of ESCRT-III may exist that interact and act sequentially. In vitro, heteromerizes with CHMP3 (but not CHMP4) to form helical tubular structures that expose membrane-interacting sites on the outside whereas VPS4B can associate on the inside of the tubule. Interacts with CHMP1B, CHMP2B, CHMP3, CHMP4A, CHMP4B, CHMP4C and CHMP5. Interacts with VPS4A; the interaction is direct. Interacts with VPS4B; the interaction is direct. Interacts with MITD1. Interacts with VTA1; the interaction probably involves the open conformation of CHMP2A. In terms of processing, ISGylated in a CHMP5-dependent manner. Isgylation weakens and inhibits its interactions with VPS4A and VTA1 respectively. As to expression, widely expressed. Highly expressed in brain, heart, liver and kidney.

It is found in the late endosome membrane. Its subcellular location is the cytoplasm. It localises to the nucleus envelope. Functionally, probable core component of the endosomal sorting required for transport complex III (ESCRT-III) which is involved in multivesicular bodies (MVBs) formation and sorting of endosomal cargo proteins into MVBs. MVBs contain intraluminal vesicles (ILVs) that are generated by invagination and scission from the limiting membrane of the endosome and mostly are delivered to lysosomes enabling degradation of membrane proteins, such as stimulated growth factor receptors, lysosomal enzymes and lipids. The MVB pathway appears to require the sequential function of ESCRT-O, -I,-II and -III complexes. ESCRT-III proteins mostly dissociate from the invaginating membrane before the ILV is released. The ESCRT machinery also functions in topologically equivalent membrane fission events, such as the terminal stages of cytokinesis. Together with SPAST, the ESCRT-III complex promotes nuclear envelope sealing and mitotic spindle disassembly during late anaphase. Recruited to the reforming nuclear envelope (NE) during anaphase by LEMD2. ESCRT-III proteins are believed to mediate the necessary vesicle extrusion and/or membrane fission activities, possibly in conjunction with the AAA ATPase VPS4. The chain is Charged multivesicular body protein 2a (Chmp2a) from Mus musculus (Mouse).